The sequence spans 267 residues: Large ribosomal subunit protein bL9m (267 aa).

A mitochondrion-targeting transit peptide spans 1 to 52 (MAALVVTEPGRALLRAGTERLLRGGIQELLRPRHEGNSPGLARDFSLSQNRG).

The protein belongs to the bacterial ribosomal protein bL9 family. In terms of assembly, component of the mitochondrial ribosome large subunit (39S) which comprises a 16S rRNA and about 50 distinct proteins.

It localises to the mitochondrion. The sequence is that of Large ribosomal subunit protein bL9m (MRPL9) from Papio anubis (Olive baboon).